The following is a 132-amino-acid chain: Histone H2A.2 (132 aa).

The protein belongs to the histone H2A family. The nucleosome is a histone octamer containing two molecules each of H2A, H2B, H3 and H4 assembled in one H3-H4 heterotetramer and two H2A-H2B heterodimers. The octamer wraps approximately 147 bp of DNA.

The protein resides in the nucleus. It is found in the chromosome. Functionally, core component of nucleosome. Nucleosomes wrap and compact DNA into chromatin, limiting DNA accessibility to the cellular machineries which require DNA as a template. Histones thereby play a central role in transcription regulation, DNA repair, DNA replication and chromosomal stability. DNA accessibility is regulated via a complex set of post-translational modifications of histones, also called histone code, and nucleosome remodeling. This Leishmania infantum protein is Histone H2A.2.